A 309-amino-acid polypeptide reads, in one-letter code: General transcription factor IIH subunit 3 (309 aa).

Residues 269–286 (CSVCLSIFCNFSPICTTC) form a C4-type zinc finger.

Belongs to the TFB4 family. As to quaternary structure, part of a TFIID-containing RNA polymerase II pre-initiation complex that is composed of TBP and at least GTF2A1, GTF2A2, GTF2E1, GTF2E2, GTF2F1, GTF2H2, GTF2H3, GTF2H4, GTF2H5, GTF2B, TCEA1, ERCC2, ERCC3, TAF1, TAF2, TAF3, TAF4, TAF5, TAF6, TAF7, TAF8, TAF9, TAF10, TAF11, TAF12 and TAF13. Component of the 7-subunit TFIIH core complex composed of XPB/ERCC3, XPD/ERCC2, GTF2H1, GTF2H2, GTF2H3, GTF2H4 and GTF2H5, which is active in NER. The core complex associates with the 3-subunit CDK-activating kinase (CAK) module composed of CCNH/cyclin H, CDK7 and MNAT1 to form the 10-subunit holoenzyme (holo-TFIIH) active in transcription. Interacts with RARA; the interaction requires prior phosphorylation of RARA on 'Ser-369' which then enhances interaction of RARA with CDK7.

Its subcellular location is the nucleus. Component of the general transcription and DNA repair factor IIH (TFIIH) core complex, which is involved in general and transcription-coupled nucleotide excision repair (NER) of damaged DNA and, when complexed to CAK, in RNA transcription by RNA polymerase II. In NER, TFIIH acts by opening DNA around the lesion to allow the excision of the damaged oligonucleotide and its replacement by a new DNA fragment. In transcription, TFIIH has an essential role in transcription initiation. When the pre-initiation complex (PIC) has been established, TFIIH is required for promoter opening and promoter escape. Phosphorylation of the C-terminal tail (CTD) of the largest subunit of RNA polymerase II by the kinase module CAK controls the initiation of transcription. The sequence is that of General transcription factor IIH subunit 3 (Gtf2h3) from Rattus norvegicus (Rat).